The chain runs to 419 residues: Gamma-glutamyl phosphate reductase (419 aa).

This sequence belongs to the gamma-glutamyl phosphate reductase family.

It localises to the cytoplasm. It carries out the reaction L-glutamate 5-semialdehyde + phosphate + NADP(+) = L-glutamyl 5-phosphate + NADPH + H(+). Its pathway is amino-acid biosynthesis; L-proline biosynthesis; L-glutamate 5-semialdehyde from L-glutamate: step 2/2. Its function is as follows. Catalyzes the NADPH-dependent reduction of L-glutamate 5-phosphate into L-glutamate 5-semialdehyde and phosphate. The product spontaneously undergoes cyclization to form 1-pyrroline-5-carboxylate. This chain is Gamma-glutamyl phosphate reductase, found in Azoarcus sp. (strain BH72).